We begin with the raw amino-acid sequence, 521 residues long: Anthranilate synthase component 1 (521 aa).

Residues threonine 40 and 292–294 each bind L-tryptophan; that span reads PYM. Residue 329 to 330 participates in chorismate binding; it reads GT. Glutamate 362 is a Mg(2+) binding site. Residues tyrosine 450, arginine 470, 484-486, and glycine 486 contribute to the chorismate site; that span reads GAG. A Mg(2+)-binding site is contributed by glutamate 499.

Belongs to the anthranilate synthase component I family. As to quaternary structure, heterotetramer consisting of two non-identical subunits: a beta subunit (TrpG) and a large alpha subunit (TrpE). Mg(2+) is required as a cofactor.

It carries out the reaction chorismate + L-glutamine = anthranilate + pyruvate + L-glutamate + H(+). Its pathway is amino-acid biosynthesis; L-tryptophan biosynthesis; L-tryptophan from chorismate: step 1/5. Its activity is regulated as follows. Feedback inhibited by tryptophan. Functionally, part of a heterotetrameric complex that catalyzes the two-step biosynthesis of anthranilate, an intermediate in the biosynthesis of L-tryptophan. In the first step, the glutamine-binding beta subunit (TrpG) of anthranilate synthase (AS) provides the glutamine amidotransferase activity which generates ammonia as a substrate that, along with chorismate, is used in the second step, catalyzed by the large alpha subunit of AS (TrpE) to produce anthranilate. In the absence of TrpG, TrpE can synthesize anthranilate directly from chorismate and high concentrations of ammonia. This chain is Anthranilate synthase component 1 (trpE), found in Buchnera aphidicola subsp. Acyrthosiphon pisum (strain APS) (Acyrthosiphon pisum symbiotic bacterium).